The following is a 535-amino-acid chain: Probable monogalactosyldiacylglycerol synthase, chloroplastic (535 aa).

The transit peptide at 1 to 113 directs the protein to the chloroplast; sequence MMQHSSSVTQ…KIPLGFASVG (113 aa).

It belongs to the glycosyltransferase 28 family.

The protein resides in the plastid. The protein localises to the chloroplast membrane. It catalyses the reaction a 1,2-diacyl-sn-glycerol + UDP-alpha-D-galactose = a 1,2-diacyl-3-O-(beta-D-galactosyl)-sn-glycerol + UDP + H(+). Involved in the synthesis of the major structural component of photosynthetic membranes. This is Probable monogalactosyldiacylglycerol synthase, chloroplastic (MGD A) from Nicotiana tabacum (Common tobacco).